The chain runs to 427 residues: Hydroxylamine reductase (427 aa).

Cys3, Cys6, Cys15, and Cys21 together coordinate [4Fe-4S] cluster. Residues His129, Glu153, Cys197, Cys283, Cys311, Cys336, Glu370, and Lys372 each contribute to the hybrid [4Fe-2O-2S] cluster site. The residue at position 283 (Cys283) is a Cysteine persulfide.

Belongs to the HCP family. [4Fe-4S] cluster is required as a cofactor. The cofactor is hybrid [4Fe-2O-2S] cluster.

The protein localises to the cytoplasm. The catalysed reaction is A + NH4(+) + H2O = hydroxylamine + AH2 + H(+). Functionally, catalyzes the reduction of hydroxylamine to form NH(3) and H(2)O. This Methanothermobacter thermautotrophicus (strain ATCC 29096 / DSM 1053 / JCM 10044 / NBRC 100330 / Delta H) (Methanobacterium thermoautotrophicum) protein is Hydroxylamine reductase.